A 165-amino-acid chain; its full sequence is Phosphopantetheine adenylyltransferase (165 aa).

Ser10 contributes to the substrate binding site. Residues 10 to 11 and His18 each bind ATP; that span reads SF. Lys42, Thr79, and Arg93 together coordinate substrate. ATP-binding positions include 94 to 96, Glu104, and 129 to 135; these read GLR and VRPITAT.

Belongs to the bacterial CoaD family. As to quaternary structure, homohexamer. It depends on Mg(2+) as a cofactor.

It localises to the cytoplasm. The enzyme catalyses (R)-4'-phosphopantetheine + ATP + H(+) = 3'-dephospho-CoA + diphosphate. The protein operates within cofactor biosynthesis; coenzyme A biosynthesis; CoA from (R)-pantothenate: step 4/5. Reversibly transfers an adenylyl group from ATP to 4'-phosphopantetheine, yielding dephospho-CoA (dPCoA) and pyrophosphate. This chain is Phosphopantetheine adenylyltransferase, found in Rhodopseudomonas palustris (strain BisB5).